Reading from the N-terminus, the 271-residue chain is Mannosyl-3-phosphoglycerate phosphatase (271 aa).

The active-site Nucleophile is the Asp13. Mg(2+) contacts are provided by Asp13, Asp15, and Asp214.

Belongs to the HAD-like hydrolase superfamily. MPGP family. Mg(2+) is required as a cofactor.

Its subcellular location is the cytoplasm. The enzyme catalyses 2-O-(alpha-D-mannosyl)-3-phosphoglycerate + H2O = (2R)-2-O-(alpha-D-mannosyl)-glycerate + phosphate. In Salmonella choleraesuis (strain SC-B67), this protein is Mannosyl-3-phosphoglycerate phosphatase (yedP).